The primary structure comprises 381 residues: Arrestin homolog (381 aa).

The protein belongs to the arrestin family.

In Heliothis virescens (Tobacco budworm moth), this protein is Arrestin homolog.